Reading from the N-terminus, the 418-residue chain is Alpha-1-antitrypsin (418 aa).

The first 24 residues, 1 to 24, serve as a signal peptide directing secretion; sequence MPSSVSWGILLLAGLCCLVPVSLA. S38 carries the post-translational modification Phosphoserine. N-linked (GlcNAc...) asparagine glycans are attached at residues N70, N107, and N271. An RCL region spans residues 373 to 392; the sequence is GAMFLEAIPMSIPPEVKFNK. At S383 the chain carries Phosphoserine.

This sequence belongs to the serpin family. As to quaternary structure, interacts with CELA2A. Interacts with ERGIC3 and LMAN1/ERGIC53. Interacts with PRSS1/Trypsin. As to expression, plasma.

Its subcellular location is the secreted. Inhibitor of serine proteases. Its primary target is elastase, but it also has a moderate affinity for plasmin and thrombin. Inhibits trypsin, chymotrypsin and plasminogen activator. In Pongo abelii (Sumatran orangutan), this protein is Alpha-1-antitrypsin (SERPINA1).